The primary structure comprises 74 residues: Translational regulator CsrA (74 aa).

This sequence belongs to the CsrA/RsmA family. In terms of assembly, homodimer. The beta-strands of each monomer intercalate to form a hydrophobic core while the alpha-helices form wings that extend away from the core. Two molecules of FliW interact with 1 homodimer. mRNA and FliW bind to different sites on CsrA.

The protein resides in the cytoplasm. Its function is as follows. A translational regulator that binds mRNA to regulate translation initiation and/or mRNA stability. Usually binds in the 5'-UTR at or near the Shine-Dalgarno sequence preventing ribosome-binding, thus repressing translation. Represses expression of flagellin (hag) in a post-transcriptional fashion. Specifically binds to 2 sites in the 5'-UTR of hag mRNA in a cooperative fashion; the second site overlaps the Shine-Dalgarno sequence and prevents 30S ribosomal subunit binding. Mutation of either binding site abolishes CsrA regulation of hag expression. Repression is greater in the 1A96 than 168 genetic background and higher in minimal than rich medium. Translation repression is antagonized by FliW. Partner switching by flagellin between FliW and CsrA provides a flagellar assembly checkpoint to tightly control the timing of flagellin synthesis. Flagellin binds to assembly factor FliW, freeing CsrA to repress translation of the flagellin mRNA. When the flagellar hook is assembled flagellin is secreted, depleting intracellular flagellin, which frees FliW to interact with CsrA and inhibits CsrA binding to mRNA. This derepresses flagellin translation and provides protein for flagellar assembly. Once the flagellar filament is completed cytoplasmic flagellin levels rise and CsrA translation repression of flagellin reinitiates. Overexpression leads to a dramatic reduction in motility, a significant reduction in flagellin synthesis and reduced flagella assembly. The sequence is that of Translational regulator CsrA from Bacillus subtilis (strain 168).